Consider the following 213-residue polypeptide: Charged multivesicular body protein 2b (213 aa).

N-acetylalanine is present on Ala2. Positions 25–55 (QRAIIRDRAALEKQEKQLELEIKKMAKIGNK) form a coiled coil. The segment at 178-202 (MAKAPSAARSLPSASTSKSTISDEE) is disordered. Residues 179-194 (AKAPSAARSLPSASTS) are compositionally biased toward low complexity. Position 199 is a phosphoserine (Ser199). Positions 201 to 211 (EEIERQLKALG) match the MIT-interacting motif motif.

This sequence belongs to the SNF7 family. Probable core component of the endosomal sorting required for transport complex III (ESCRT-III). ESCRT-III components are thought to multimerize to form a flat lattice on the perimeter membrane of the endosome. Several assembly forms of ESCRT-III may exist that interact and act sequentially. Interacts with CHMP2A. Interacts with VPS4A. Interacts with VPS4B; the interaction is direct.

Its subcellular location is the cytoplasm. It is found in the cytosol. The protein resides in the late endosome membrane. Probable core component of the endosomal sorting required for transport complex III (ESCRT-III) which is involved in multivesicular bodies (MVBs) formation and sorting of endosomal cargo proteins into MVBs. MVBs contain intraluminal vesicles (ILVs) that are generated by invagination and scission from the limiting membrane of the endosome and mostly are delivered to lysosomes enabling degradation of membrane proteins, such as stimulated growth factor receptors, lysosomal enzymes and lipids. The MVB pathway appears to require the sequential function of ESCRT-O, -I,-II and -III complexes. ESCRT-III proteins mostly dissociate from the invaginating membrane before the ILV is released. The ESCRT machinery also functions in topologically equivalent membrane fission events, such as the terminal stages of cytokinesis and the budding of enveloped viruses (lentiviruses). ESCRT-III proteins are believed to mediate the necessary vesicle extrusion and/or membrane fission activities, possibly in conjunction with the AAA ATPase VPS4. The protein is Charged multivesicular body protein 2b (CHMP2B) of Bos taurus (Bovine).